Reading from the N-terminus, the 802-residue chain is Xylanase/beta-glucanase (802 aa).

Residues 1 to 31 (MKKSIFKRYAAAVGLMASVLMFTAVPTTSNA) form the signal peptide. Residues 32–239 (ADDQKTGKVG…SNGSANVKSI (208 aa)) form the GH11 domain. Catalysis depends on glutamate 124, which acts as the Nucleophile. Residue glutamate 226 is the Proton donor of the active site. Residues 245–523 (IDIPDPEPIK…SYLEGHDPSK (279 aa)) form a b region. One can recognise a CBM-cenC domain in the interval 258–404 (NGYYLKENFE…YMDGAYAGVK (147 aa)). 2 disordered regions span residues 414–436 (SQSVDPPVTEPTNPTNPTGPSVT) and 533–564 (TTTTTTTTTTTSKTTTTTTTTSPAMHGGYRDL). 2 stretches are compositionally biased toward low complexity: residues 419 to 436 (PPVTEPTNPTNPTGPSVT) and 533 to 553 (TTTTTTTTTTTSKTTTTTTTT). Residues 434-513 (SVTKWGDANC…LIRAISELPE (80 aa)) form the Dockerin domain. Positions 524 to 555 (TTTTTTRITTTTTTTTTTTTSKTTTTTTTTSP) are linker. The GH16 domain occupies 556-792 (AMHGGYRDLG…WVTYNKNGVQ (237 aa)). The active-site Nucleophile is the glutamate 684.

This sequence in the N-terminal section; belongs to the glycosyl hydrolase 11 (cellulase G) family. In the C-terminal section; belongs to the glycosyl hydrolase 16 family.

It catalyses the reaction Endohydrolysis of (1-&gt;4)-beta-D-xylosidic linkages in xylans.. The enzyme catalyses Hydrolysis of (1-&gt;4)-beta-D-glucosidic linkages in beta-D-glucans containing (1-&gt;3)- and (1-&gt;4)-bonds.. Its pathway is glycan degradation; xylan degradation. In terms of biological role, contains two catalytic domains with xylanase and endo-beta-1,3-1,4 glucanase activities. The chain is Xylanase/beta-glucanase (xynD) from Ruminococcus flavefaciens.